We begin with the raw amino-acid sequence, 215 residues long: Ependymin (215 aa).

A signal peptide spans 1–20; that stretch reads MHTVKLLCVVFSCLCAVAWA. 2 N-linked (GlcNAc...) asparagine glycosylation sites follow: Asn71 and Asn94.

It belongs to the ependymin family. Forms disulfide-linked dimers. In terms of processing, binds calcium through the terminal sialic acids. EPDs are synthesized in the meninx and secreted in the cerebrospinal fluid.

It localises to the secreted. Its function is as follows. May play a role in neural plasticity. May be involved during axon regeneration. The sequence is that of Ependymin (epd) from Cyprinus carpio (Common carp).